A 613-amino-acid chain; its full sequence is Probable Xaa-Pro aminopeptidase P (613 aa).

The Mn(2+) site is built by Asp408, Asp419, Glu517, and Glu531.

This sequence belongs to the peptidase M24B family. Requires Mn(2+) as cofactor.

The enzyme catalyses Release of any N-terminal amino acid, including proline, that is linked to proline, even from a dipeptide or tripeptide.. In terms of biological role, catalyzes the removal of a penultimate prolyl residue from the N-termini of peptides. This is Probable Xaa-Pro aminopeptidase P (ampp) from Penicillium rubens (strain ATCC 28089 / DSM 1075 / NRRL 1951 / Wisconsin 54-1255) (Penicillium chrysogenum).